Reading from the N-terminus, the 427-residue chain is Phosphoglucosamine mutase (427 aa).

Ser94 (phosphoserine intermediate) is an active-site residue. Mg(2+)-binding residues include Ser94, Asp228, Asp230, and Asp232. Ser94 carries the post-translational modification Phosphoserine.

This sequence belongs to the phosphohexose mutase family. Requires Mg(2+) as cofactor. In terms of processing, activated by phosphorylation.

The catalysed reaction is alpha-D-glucosamine 1-phosphate = D-glucosamine 6-phosphate. Its function is as follows. Catalyzes the conversion of glucosamine-6-phosphate to glucosamine-1-phosphate. This Thermotoga sp. (strain RQ2) protein is Phosphoglucosamine mutase.